Consider the following 152-residue polypeptide: Probable flagellum biosynthesis repressor protein FlbT (152 aa).

This sequence belongs to the FlbT family.

In terms of biological role, has a post-transcriptional repressor function in flagellum biogenesis. Associates with the 5'-UTR of fljK mRNA and promotes its degradation. The chain is Probable flagellum biosynthesis repressor protein FlbT from Brucella canis (strain ATCC 23365 / NCTC 10854 / RM-666).